A 495-amino-acid polypeptide reads, in one-letter code: UDP-N-acetylmuramoyl-L-alanyl-D-glutamate--2,6-diaminopimelate ligase (495 aa).

Ser29 contacts UDP-N-acetyl-alpha-D-muramoyl-L-alanyl-D-glutamate. 111–117 (GTNGKTS) serves as a coordination point for ATP. UDP-N-acetyl-alpha-D-muramoyl-L-alanyl-D-glutamate contacts are provided by residues 153–154 (TT), Ser180, Gln186, and Arg188. An N6-carboxylysine modification is found at Lys220. Meso-2,6-diaminopimelate is bound by residues Arg384, 408–411 (DNPR), Gly459, and Glu463. The short motif at 408–411 (DNPR) is the Meso-diaminopimelate recognition motif element.

Belongs to the MurCDEF family. MurE subfamily. Requires Mg(2+) as cofactor. Carboxylation is probably crucial for Mg(2+) binding and, consequently, for the gamma-phosphate positioning of ATP.

It localises to the cytoplasm. The catalysed reaction is UDP-N-acetyl-alpha-D-muramoyl-L-alanyl-D-glutamate + meso-2,6-diaminopimelate + ATP = UDP-N-acetyl-alpha-D-muramoyl-L-alanyl-gamma-D-glutamyl-meso-2,6-diaminopimelate + ADP + phosphate + H(+). It participates in cell wall biogenesis; peptidoglycan biosynthesis. Its function is as follows. Catalyzes the addition of meso-diaminopimelic acid to the nucleotide precursor UDP-N-acetylmuramoyl-L-alanyl-D-glutamate (UMAG) in the biosynthesis of bacterial cell-wall peptidoglycan. This Xylella fastidiosa (strain Temecula1 / ATCC 700964) protein is UDP-N-acetylmuramoyl-L-alanyl-D-glutamate--2,6-diaminopimelate ligase.